The primary structure comprises 288 residues: Galactose/N-acetyl-D-galactosamine lectin light subunit 1 (288 aa).

An N-terminal signal peptide occupies residues 1 to 15 (MIILVLLISYSFGKT). Asn-205 and Asn-261 each carry an N-linked (GlcNAc...) asparagine glycan.

Heterodimer composed of a 170 kDa heavy subunit (hgl) and a 31/35 kDa light subunit (lgl); disulfide-linked.

The protein localises to the cell membrane. In terms of biological role, light subunit of a heterodimeric lectin; the heavy subunit binds galactose and N-acetyl-D-galactosamine of host glycoproteins and thus mediates adhesion to host cells. The chain is Galactose/N-acetyl-D-galactosamine lectin light subunit 1 from Entamoeba histolytica (strain ATCC 30459 / HM-1:IMSS / ABRM).